Consider the following 114-residue polypeptide: U17-barytoxin-Tl1a (114 aa).

The N-terminal stretch at 1–20 (MKTIIVFLSLLVLATKFGDA) is a signal peptide. Residues 21-74 (NEGVNQEQMKEVIQNEFREDFLNEMAAMSLLQQLEAIESTLLEKEADRNSRQKR) constitute a propeptide that is removed on maturation. 3 disulfide bridges follow: Cys-75–Cys-88, Cys-82–Cys-93, and Cys-87–Cys-108.

It belongs to the neurotoxin 14 (magi-1) family. 03 (ICK-30-40) subfamily. In terms of tissue distribution, expressed by the venom gland.

The protein resides in the secreted. Its function is as follows. Ion channel inhibitor. The chain is U17-barytoxin-Tl1a from Trittame loki (Brush-footed trapdoor spider).